The sequence spans 1206 residues: DNA-directed RNA polymerase subunit beta' (1206 aa).

Zn(2+)-binding residues include Cys60, Cys62, Cys75, and Cys78. 3 residues coordinate Mg(2+): Asp449, Asp451, and Asp453. Residues Cys822, Cys896, Cys903, and Cys906 each coordinate Zn(2+).

This sequence belongs to the RNA polymerase beta' chain family. In terms of assembly, the RNAP catalytic core consists of 2 alpha, 1 beta, 1 beta' and 1 omega subunit. When a sigma factor is associated with the core the holoenzyme is formed, which can initiate transcription. It depends on Mg(2+) as a cofactor. Zn(2+) serves as cofactor.

It catalyses the reaction RNA(n) + a ribonucleoside 5'-triphosphate = RNA(n+1) + diphosphate. DNA-dependent RNA polymerase catalyzes the transcription of DNA into RNA using the four ribonucleoside triphosphates as substrates. The chain is DNA-directed RNA polymerase subunit beta' from Staphylococcus haemolyticus (strain JCSC1435).